We begin with the raw amino-acid sequence, 297 residues long: CASP-like protein 4A2 (297 aa).

The segment at 1 to 136 (MKMKRTVSSN…MNGEESATTA (136 aa)) is disordered. Residues 1–149 (MKMKRTVSSN…ARRDDLVSVT (149 aa)) lie on the Cytoplasmic side of the membrane. Positions 8-19 (SSNSEAYSYNES) are enriched in low complexity. Over residues 69 to 83 (LPSPIPPPPPQIPPP) the composition is skewed to pro residues. A compositionally biased stretch (polar residues) spans 93 to 121 (MNSSLDKSPSSMVVQNSWVREDGQQNTTR). A helical membrane pass occupies residues 150 to 170 (ALGFRITEVILCVISFSIMAA). Residues 171–189 (DKTQGWSGDSYDRYKEYRY) lie on the Extracellular side of the membrane. The helical transmembrane segment at 190-210 (CLAVNVIAFVYSAFEACDAAC) threads the bilayer. Residues 211 to 225 (YMAKESYMMNCGFHD) are Cytoplasmic-facing. Residues 226–246 (LFVFSMDQLLAYLLMSASSCA) traverse the membrane as a helical segment. At 247 to 265 (ATRVDDWVSNWGKDEFTQM) the chain is on the extracellular side. A helical transmembrane segment spans residues 266-286 (ATASIAVSFLAFGAFAVSALI). The Cytoplasmic segment spans residues 287–297 (SSYRLFTHASS).

It belongs to the Casparian strip membrane proteins (CASP) family. Homodimer and heterodimers.

The protein localises to the cell membrane. The polypeptide is CASP-like protein 4A2 (Arabidopsis lyrata subsp. lyrata (Lyre-leaved rock-cress)).